The following is a 364-amino-acid chain: Spermidine/putrescine import ATP-binding protein PotA (364 aa).

An ABC transporter domain is found at 5–235; sequence LSFKGVTKGF…PVNRFVADFI (231 aa). 37–44 contacts ATP; the sequence is GPSGCGKT.

The protein belongs to the ABC transporter superfamily. Spermidine/putrescine importer (TC 3.A.1.11.1) family. The complex is composed of two ATP-binding proteins (PotA), two transmembrane proteins (PotB and PotC) and a solute-binding protein (PotD).

The protein resides in the cell membrane. The enzyme catalyses ATP + H2O + polyamine-[polyamine-binding protein]Side 1 = ADP + phosphate + polyamineSide 2 + [polyamine-binding protein]Side 1.. Functionally, part of the ABC transporter complex PotABCD involved in spermidine/putrescine import. Responsible for energy coupling to the transport system. The protein is Spermidine/putrescine import ATP-binding protein PotA of Staphylococcus haemolyticus (strain JCSC1435).